An 84-amino-acid chain; its full sequence is Small ribosomal subunit protein bS16 (84 aa).

This sequence belongs to the bacterial ribosomal protein bS16 family.

The protein is Small ribosomal subunit protein bS16 of Paraburkholderia phytofirmans (strain DSM 17436 / LMG 22146 / PsJN) (Burkholderia phytofirmans).